The following is a 200-amino-acid chain: Pyridoxal 5'-phosphate synthase subunit PdxT (200 aa).

52 to 54 (GES) is a binding site for L-glutamine. Cysteine 84 (nucleophile) is an active-site residue. Residues arginine 116 and 145 to 146 (IR) contribute to the L-glutamine site. Residues histidine 181 and glutamate 183 each act as charge relay system in the active site.

The protein belongs to the glutaminase PdxT/SNO family. As to quaternary structure, in the presence of PdxS, forms a dodecamer of heterodimers. Only shows activity in the heterodimer.

It carries out the reaction aldehydo-D-ribose 5-phosphate + D-glyceraldehyde 3-phosphate + L-glutamine = pyridoxal 5'-phosphate + L-glutamate + phosphate + 3 H2O + H(+). The enzyme catalyses L-glutamine + H2O = L-glutamate + NH4(+). Its pathway is cofactor biosynthesis; pyridoxal 5'-phosphate biosynthesis. Its function is as follows. Catalyzes the hydrolysis of glutamine to glutamate and ammonia as part of the biosynthesis of pyridoxal 5'-phosphate. The resulting ammonia molecule is channeled to the active site of PdxS. The chain is Pyridoxal 5'-phosphate synthase subunit PdxT from Saccharolobus solfataricus (strain ATCC 35092 / DSM 1617 / JCM 11322 / P2) (Sulfolobus solfataricus).